Reading from the N-terminus, the 168-residue chain is MSFDELPKSDGYQEKLVSVTRTAKVVKGGRVFGFAVLVVVGDGKGKVGFGRGKAREVPIAIQKAMDQAKKNMVYIPLSGTTIFHEITWNYGASKVFMKPASEGTGIIAGGAMRAVLEVLGVQNILAKSIGSTNPSNIVRATIGALTHIGTPDYVAAKRGKTVEEVMAG.

The S5 DRBM domain maps to 12–75 (YQEKLVSVTR…DQAKKNMVYI (64 aa)).

This sequence belongs to the universal ribosomal protein uS5 family. Part of the 30S ribosomal subunit. Contacts proteins S4 and S8.

With S4 and S12 plays an important role in translational accuracy. Functionally, located at the back of the 30S subunit body where it stabilizes the conformation of the head with respect to the body. The protein is Small ribosomal subunit protein uS5 of Legionella pneumophila (strain Paris).